Consider the following 155-residue polypeptide: SsrA-binding protein (155 aa).

It belongs to the SmpB family.

The protein localises to the cytoplasm. Functionally, required for rescue of stalled ribosomes mediated by trans-translation. Binds to transfer-messenger RNA (tmRNA), required for stable association of tmRNA with ribosomes. tmRNA and SmpB together mimic tRNA shape, replacing the anticodon stem-loop with SmpB. tmRNA is encoded by the ssrA gene; the 2 termini fold to resemble tRNA(Ala) and it encodes a 'tag peptide', a short internal open reading frame. During trans-translation Ala-aminoacylated tmRNA acts like a tRNA, entering the A-site of stalled ribosomes, displacing the stalled mRNA. The ribosome then switches to translate the ORF on the tmRNA; the nascent peptide is terminated with the 'tag peptide' encoded by the tmRNA and targeted for degradation. The ribosome is freed to recommence translation, which seems to be the essential function of trans-translation. This is SsrA-binding protein from Bacillus cereus (strain 03BB102).